The following is a 114-amino-acid chain: Probable non-functional T cell receptor beta variable 5-7 (114 aa).

Residues M1 to A21 form the signal peptide. In terms of domain architecture, Ig-like spans G22–L114. The cysteines at positions 42 and 110 are disulfide-linked. A glycan (N-linked (GlcNAc...) asparagine) is linked at N90.

In terms of assembly, alpha-beta TR is a heterodimer composed of an alpha and beta chain; disulfide-linked. The alpha-beta TR is associated with the transmembrane signaling CD3 coreceptor proteins to form the TR-CD3 (TcR or TCR). The assembly of alpha-beta TR heterodimers with CD3 occurs in the endoplasmic reticulum where a single alpha-beta TR heterodimer associates with one CD3D-CD3E heterodimer, one CD3G-CD3E heterodimer and one CD247 homodimer forming a stable octameric structure. CD3D-CD3E and CD3G-CD3E heterodimers preferentially associate with TR alpha and TR beta chains, respectively. The association of the CD247 homodimer is the last step of TcR assembly in the endoplasmic reticulum and is required for transport to the cell surface.

Its subcellular location is the cell membrane. Its function is as follows. Probable non-functional open reading frame (ORF) of V region of the variable domain of T cell receptor (TR) beta chain. Non-functional ORF generally cannot participate in the synthesis of a productive T cell receptor (TR) chain due to altered V-(D)-J or switch recombination and/or splicing site (at mRNA level) and/or conserved amino acid change (protein level). Alpha-beta T cell receptors are antigen specific receptors which are essential to the immune response and are present on the cell surface of T lymphocytes. Recognize peptide-major histocompatibility (MH) (pMH) complexes that are displayed by antigen presenting cells (APC), a prerequisite for efficient T cell adaptive immunity against pathogens. Binding of alpha-beta TR to pMH complex initiates TR-CD3 clustering on the cell surface and intracellular activation of LCK that phosphorylates the ITAM motifs of CD3G, CD3D, CD3E and CD247 enabling the recruitment of ZAP70. In turn ZAP70 phosphorylates LAT, which recruits numerous signaling molecules to form the LAT signalosome. The LAT signalosome propagates signal branching to three major signaling pathways, the calcium, the mitogen-activated protein kinase (MAPK) kinase and the nuclear factor NF-kappa-B (NF-kB) pathways, leading to the mobilization of transcription factors that are critical for gene expression and essential for T cell growth and differentiation. The T cell repertoire is generated in the thymus, by V-(D)-J rearrangement. This repertoire is then shaped by intrathymic selection events to generate a peripheral T cell pool of self-MH restricted, non-autoaggressive T cells. Post-thymic interaction of alpha-beta TR with the pMH complexes shapes TR structural and functional avidity. In Homo sapiens (Human), this protein is Probable non-functional T cell receptor beta variable 5-7.